The sequence spans 298 residues: Oligodendrocyte transcription factor 2 (298 aa).

The span at 1–13 (MDSDASLVSSRPS) shows a compositional bias: polar residues. Disordered regions lie at residues 1–60 (MDSD…SAEL) and 79–102 (SSSS…MTEP). Residues 26-41 (NKGGGGGGGGGGGFTG) show a composition bias toward gly residues. The segment covering 79 to 91 (SSSSSASSASSAS) has biased composition (low complexity). Positions 106–160 (QLRLKINSRERKRMHDLNIAMDGLREVMPYAHGPSVRKLSKIATLLLARNYILML) constitute a bHLH domain.

It localises to the nucleus. Its function is as follows. Required for oligodendrocyte and motor neuron specification in the spinal cord. This Gallus gallus (Chicken) protein is Oligodendrocyte transcription factor 2 (OLIG2).